The sequence spans 299 residues: Lathosterol oxidase (299 aa).

Transmembrane regions (helical) follow at residues 32-52, 79-99, and 117-137; these read VSLL…CATL, FTVK…LLEL, and IHLI…IYWI. A Fatty acid hydroxylase domain is found at 124–252; the sequence is ISFLFFTDML…YFTLWDRIGG (129 aa). The Histidine box-1 signature appears at 138-143; it reads HRGLHH. The short motif at 151–155 is the Histidine box-2 element; sequence HKPHH. A Histidine box-3 motif is present at residues 228–233; it reads HHTDHH. Ser253 is subject to Phosphoserine.

The protein belongs to the sterol desaturase family. It depends on Fe cation as a cofactor.

It localises to the endoplasmic reticulum membrane. The enzyme catalyses a Delta(7)-sterol + 2 Fe(II)-[cytochrome b5] + O2 + 2 H(+) = a Delta(5),Delta(7)-sterol + 2 Fe(III)-[cytochrome b5] + 2 H2O. It carries out the reaction lathosterol + 2 Fe(II)-[cytochrome b5] + O2 + 2 H(+) = 7-dehydrocholesterol + 2 Fe(III)-[cytochrome b5] + 2 H2O. The catalysed reaction is 5alpha-cholesta-7,24-dien-3beta-ol + 2 Fe(II)-[cytochrome b5] + O2 + 2 H(+) = 7-dehydrodesmosterol + 2 Fe(III)-[cytochrome b5] + 2 H2O. It functions in the pathway steroid biosynthesis; cholesterol biosynthesis. Functionally, catalyzes the penultimate step of the biosynthesis of cholesterol, the dehydrogenation of lathosterol into 7-dehydrocholesterol (7-DHC). Cholesterol is the major sterol component in mammalian membranes and a precursor for bile acid and steroid hormone synthesis. In addition to its essential role in cholesterol biosynthesis, it also indirectly regulates ferroptosis through the production of 7-DHC. By diverting the spread of damage caused by peroxyl radicals from the phospholipid components to its sterol nucleus, 7-DHC prevents this form of cell death. In Rattus norvegicus (Rat), this protein is Lathosterol oxidase.